The primary structure comprises 62 residues: Sperm protamine P1 (62 aa).

The interval 1 to 62 is disordered; that stretch reads MARYRHSRSR…RYSRRRRRRY (62 aa).

This sequence belongs to the protamine P1 family. As to expression, testis.

Its subcellular location is the nucleus. It localises to the chromosome. Its function is as follows. Protamines substitute for histones in the chromatin of sperm during the haploid phase of spermatogenesis. They compact sperm DNA into a highly condensed, stable and inactive complex. The sequence is that of Sperm protamine P1 (PRM1) from Dorcopsulus vanheurni (Lesser forest wallaby).